The primary structure comprises 209 residues: Uracil phosphoribosyltransferase (209 aa).

5-phospho-alpha-D-ribose 1-diphosphate contacts are provided by residues Arg-79, Arg-104, and 131–139 (DPLLATGNS). Residues Ile-194 and 199 to 201 (GDA) contribute to the uracil site. Asp-200 serves as a coordination point for 5-phospho-alpha-D-ribose 1-diphosphate.

This sequence belongs to the UPRTase family. Mg(2+) serves as cofactor.

The enzyme catalyses UMP + diphosphate = 5-phospho-alpha-D-ribose 1-diphosphate + uracil. The protein operates within pyrimidine metabolism; UMP biosynthesis via salvage pathway; UMP from uracil: step 1/1. With respect to regulation, allosterically activated by GTP. In terms of biological role, catalyzes the conversion of uracil and 5-phospho-alpha-D-ribose 1-diphosphate (PRPP) to UMP and diphosphate. This Rhodococcus opacus (strain B4) protein is Uracil phosphoribosyltransferase.